The following is a 240-amino-acid chain: Putative exosome complex component RRP41 (240 aa).

The protein belongs to the RNase PH family. Component of the RNA exosome complex.

It is found in the cytoplasm. The protein resides in the nucleus. It localises to the nucleolus. Its subcellular location is the nucleoplasm. Functionally, non-catalytic component of the RNA exosome complex which has 3'-&gt;5' exoribonuclease activity and participates in a multitude of cellular RNA processing and degradation events. The chain is Putative exosome complex component RRP41 (exos-4.1) from Caenorhabditis elegans.